The following is a 1072-amino-acid chain: Carbamoyl phosphate synthase large chain (1072 aa).

Positions 1–401 are carboxyphosphate synthetic domain; the sequence is MPKRLDINTI…SLLKAVRSLE (401 aa). Residues R129, R169, G175, G176, K208, I210, E215, G241, V242, H243, Q284, and E298 each contribute to the ATP site. Positions 133-327 constitute an ATP-grasp 1 domain; the sequence is RTLMQELNEP…IAKLAAKIAV (195 aa). 3 residues coordinate Mg(2+): Q284, E298, and N300. Residues Q284, E298, and N300 each coordinate Mn(2+). The interval 402–546 is oligomerization domain; it reads LGIYHLELDH…YSTYADENES (145 aa). The tract at residues 547 to 929 is carbamoyl phosphate synthetic domain; sequence IVTDRKSVVV…ALYKGLVASG (383 aa). The 191-residue stretch at 671-861 folds into the ATP-grasp 2 domain; it reads EAALTKLGIP…MANVATKVIL (191 aa). Residues R707, R746, E752, G777, V778, H779, S780, Q820, and E832 each contribute to the ATP site. Mg(2+) contacts are provided by Q820, E832, and N834. Residues Q820, E832, and N834 each contribute to the Mn(2+) site. Residues 930–1072 form the MGS-like domain; that stretch reads INIPTHGSVI…QTKRHEVVHA (143 aa). Positions 930 to 1072 are allosteric domain; it reads INIPTHGSVI…QTKRHEVVHA (143 aa).

It belongs to the CarB family. In terms of assembly, composed of two chains; the small (or glutamine) chain promotes the hydrolysis of glutamine to ammonia, which is used by the large (or ammonia) chain to synthesize carbamoyl phosphate. Tetramer of heterodimers (alpha,beta)4. Mg(2+) serves as cofactor. The cofactor is Mn(2+).

The enzyme catalyses hydrogencarbonate + L-glutamine + 2 ATP + H2O = carbamoyl phosphate + L-glutamate + 2 ADP + phosphate + 2 H(+). The catalysed reaction is hydrogencarbonate + NH4(+) + 2 ATP = carbamoyl phosphate + 2 ADP + phosphate + 2 H(+). The protein operates within amino-acid biosynthesis; L-arginine biosynthesis; carbamoyl phosphate from bicarbonate: step 1/1. It participates in pyrimidine metabolism; UMP biosynthesis via de novo pathway; (S)-dihydroorotate from bicarbonate: step 1/3. In terms of biological role, large subunit of the glutamine-dependent carbamoyl phosphate synthetase (CPSase). CPSase catalyzes the formation of carbamoyl phosphate from the ammonia moiety of glutamine, carbonate, and phosphate donated by ATP, constituting the first step of 2 biosynthetic pathways, one leading to arginine and/or urea and the other to pyrimidine nucleotides. The large subunit (synthetase) binds the substrates ammonia (free or transferred from glutamine from the small subunit), hydrogencarbonate and ATP and carries out an ATP-coupled ligase reaction, activating hydrogencarbonate by forming carboxy phosphate which reacts with ammonia to form carbamoyl phosphate. The chain is Carbamoyl phosphate synthase large chain from Bacillus cereus (strain AH820).